A 308-amino-acid chain; its full sequence is CD276 antigen homolog (308 aa).

Positions 1 to 15 are cleaved as a signal peptide; sequence MAALCLLLLLSLAEA. The Extracellular portion of the chain corresponds to 16–236; sequence IDLRVPELPV…VTGQHLSFPP (221 aa). One can recognise an Ig-like V-type domain in the interval 21–125; it reads PELPVIGLLD…VQNSSSASVS (105 aa). 2 disulfide bridges follow: C37–C112 and C155–C210. One can recognise an Ig-like C2-type domain in the interval 135–228; sequence PTLHLEPSEA…DVTHASLTVT (94 aa). Residues 237–257 traverse the membrane as a helical segment; sequence LVLWVTVGLSICLLCLLVALA. Over 258–308 the chain is Cytoplasmic; it reads CVCRKHLKQTCEEEQENAGNEEHEENGELKTAMQPLKVTSPGEDDDAECLE. The disordered stretch occupies residues 270–308; the sequence is EEQENAGNEEHEENGELKTAMQPLKVTSPGEDDDAECLE. A compositionally biased stretch (acidic residues) spans 299 to 308; that stretch reads GEDDDAECLE.

The protein belongs to the immunoglobulin superfamily. BTN/MOG family.

It is found in the membrane. Functionally, modulates immune responses. This is CD276 antigen homolog (cd276) from Xenopus laevis (African clawed frog).